A 486-amino-acid chain; its full sequence is Shutoff alkaline exonuclease (486 aa).

Belongs to the herpesviridae alkaline nuclease family. As to quaternary structure, forms a complex with the DNA polymerase, the DNA polymerase processivity factor, and the major DNA binding protein.

The protein resides in the host nucleus. It localises to the host cytoplasm. Functionally, plays a role in processing non linear or branched viral DNA intermediates in order to promote the production of mature packaged unit-length linear progeny viral DNA molecules. Exhibits endonuclease and exonuclease activities and accepts both double-stranded and single-stranded DNA as substrate. Exonuclease digestion of DNA is in the 5'-&gt; 3' direction and the products are 5'-monophosphate nucleosides. Additionally, forms a recombinase with the major DNA-binding protein, which displays strand exchange activity. Also acts as a cytoplasmic RNA endonuclease that induces degradation of the majority of the cellular messenger RNAs during early lytic infection. The resulting inhibition of cellular protein synthesis serves to ensure maximal viral gene expression and evasion from host immune response. Internally cleaves host mRNAs which are then degraded by the cellular exonuclease XRN1. Bypasses therefore the regulatory steps of deadenylation and decapping normally required for XRN1 activation. In addition, inhibits host inflammasome activation to promote viral lytic replication by interacting with host AIM2 and disrupting its polymerization. In Human herpesvirus 8 type P (isolate GK18) (HHV-8), this protein is Shutoff alkaline exonuclease (ORF37).